We begin with the raw amino-acid sequence, 546 residues long: MTNMFASAAPISTNNTTVEDMRRSVTYHPSVWKDHFLDYASGITEVEMEQLQKQKERIKTLLAQTLDDFVLKIELIDAIQRLGVGYHFEKEINHSLRQIYDTFQISSKDNDIRVVALRFRLLRQHGYPVPSDVFKKFIDNQGRLDESVMNNVEGMLSLYEASNYGMEGEDILDKALEISTSHLEPLASRSRRINEALEMPISKTLVRLGARKFISIYEEDESRDEDLLKFAKLDFNILQKIHQEELTHIARWWKELDLGNKLPFARDRVVECYFWILGVYFEPQYNIARRFMTKVIAMTSIIDDIYDVHGTLEELQRFTDAIRSWDIRAIDELPPYMRLCYEALLGMYAEMENEMVKQNQSYRIEYARQEMIKLVTTYMEEAKWCYSKYIPNMDEYMKLALVSGAYMMLATTSLVGILGDPITKQDFDWITNEPPILRAASVICRLMDDVVGHGIEQKISSVDCYMKENGCSKMEAVGEFSKRVKKAWKNLNEEWVEPRAASMVILVRVVNLARVINLLYVGEDSYGNSSVKTKELIKGVLVHPIK.

4 residues coordinate Mg(2+): Asp303, Asp307, Asp448, and Glu456. Positions 303–307 (DDIYD) match the DDXXD motif motif.

Belongs to the terpene synthase family. It depends on Mg(2+) as a cofactor. The cofactor is Mn(2+).

The catalysed reaction is (2E,6E)-farnesyl diphosphate = (-)-germacrene D + diphosphate. It participates in secondary metabolite biosynthesis; terpenoid biosynthesis. Its function is as follows. Sesquiterpene synthase that catalyzes the formation of germacrene D from trans,trans-farnesyl diphosphate (FPP). This chain is Germacrene-D synthase (GDS), found in Ocimum basilicum (Sweet basil).